A 346-amino-acid chain; its full sequence is N(4)-(beta-N-acetylglucosaminyl)-L-asparaginase (346 aa).

An N-terminal signal peptide occupies residues 1–23 (MERKSNLSLLLLLLVLGMPLVRG). An N-linked (GlcNAc...) asparagine glycan is attached at asparagine 38. Cystine bridges form between cysteine 64/cysteine 69 and cysteine 163/cysteine 179. Threonine 206 functions as the Nucleophile in the catalytic mechanism. Residues 234–237 (RVGD) and 257–260 (TGDG) contribute to the substrate site. A disulfide bond links cysteine 286 and cysteine 306. Asparagine 310 is a glycosylation site (N-linked (GlcNAc...) asparagine). Cysteines 317 and 345 form a disulfide.

Belongs to the Ntn-hydrolase family. As to quaternary structure, heterotetramer of two alpha and two beta chains arranged as a dimer of alpha/beta heterodimers. In terms of processing, cleaved into an alpha and beta chain by autocatalysis; this activates the enzyme. The N-terminal residue of the beta subunit is responsible for the nucleophile hydrolase activity. N-glycosylated.

Its subcellular location is the lysosome. The enzyme catalyses N(4)-(beta-N-acetyl-D-glucosaminyl)-L-asparagine + H2O = N-acetyl-beta-D-glucosaminylamine + L-aspartate + H(+). Functionally, cleaves the GlcNAc-Asn bond which joins oligosaccharides to the peptide of asparagine-linked glycoproteins. This Mus musculus (Mouse) protein is N(4)-(beta-N-acetylglucosaminyl)-L-asparaginase (Aga).